Here is a 707-residue protein sequence, read N- to C-terminus: Protein kinase C theta type (707 aa).

The 107-residue stretch at Met1–Leu107 folds into the C2 domain. Residue Tyr90 is modified to Phosphotyrosine; by LCK. A Phorbol-ester/DAG-type 1 zinc finger spans residues Cys159–Cys209. A Phosphothreonine; by autocatalysis modification is found at Thr219. The segment at Pro231–Cys281 adopts a Phorbol-ester/DAG-type 2 zinc-finger fold. Ser348 is subject to Phosphoserine. Positions Phe380 to Phe634 constitute a Protein kinase domain. ATP contacts are provided by residues Leu386 to Val394 and Lys409. The active-site Proton acceptor is the Asp504. Thr538 carries the phosphothreonine; by PDPK1 modification. In terms of domain architecture, AGC-kinase C-terminal spans Arg635–Cys706. A phosphoserine mark is found at Ser676 and Ser685. Ser695 carries the post-translational modification Phosphoserine; by autocatalysis.

This sequence belongs to the protein kinase superfamily. AGC Ser/Thr protein kinase family. PKC subfamily. In terms of assembly, part of a membrane raft complex composed at least of BCL10, CARD11, MALT1 and IKBKB. Interacts with GLRX3 (via N-terminus). Interacts with ECT2. Interacts with CCDC88A/GIV; the interaction leads to phosphorylation of CCDC88A and inhibition of its guanine nucleotide exchange factor activity. Interacts with CD28. The cofactor is Mg(2+). In terms of processing, autophosphorylation at Thr-219 is required for targeting to the TCR and cellular function of PRKCQ upon antigen receptor ligation. Following TCR stimulation, phosphorylated at Tyr-90 and Ser-685.

The protein resides in the cytoplasm. Its subcellular location is the cell membrane. The catalysed reaction is L-seryl-[protein] + ATP = O-phospho-L-seryl-[protein] + ADP + H(+). The enzyme catalyses L-threonyl-[protein] + ATP = O-phospho-L-threonyl-[protein] + ADP + H(+). With respect to regulation, novel PKCs (PRKCD, PRKCE, PRKCH and PRKCQ) are calcium-insensitive, but activated by diacylglycerol (DAG) and phosphatidylserine. Three specific sites; Thr-538 (activation loop of the kinase domain), Ser-676 (turn motif) and Ser-695 (hydrophobic region), need to be phosphorylated for its full activation. Calcium-independent, phospholipid- and diacylglycerol (DAG)-dependent serine/threonine-protein kinase that mediates non-redundant functions in T-cell receptor (TCR) signaling, including T-cells activation, proliferation, differentiation and survival, by mediating activation of multiple transcription factors such as NF-kappa-B, JUN, NFATC1 and NFATC2. In TCR-CD3/CD28-co-stimulated T-cells, is required for the activation of NF-kappa-B and JUN, which in turn are essential for IL2 production, and participates in the calcium-dependent NFATC1 and NFATC2 transactivation. Mediates the activation of the canonical NF-kappa-B pathway (NFKB1) by direct phosphorylation of CARD11 on several serine residues, inducing CARD11 association with lipid rafts and recruitment of the BCL10-MALT1 complex, which then activates IKK complex, resulting in nuclear translocation and activation of NFKB1. May also play an indirect role in activation of the non-canonical NF-kappa-B (NFKB2) pathway. In the signaling pathway leading to JUN activation, acts by phosphorylating the mediator STK39/SPAK and may not act through MAP kinases signaling. Plays a critical role in TCR/CD28-induced NFATC1 and NFATC2 transactivation by participating in the regulation of reduced inositol 1,4,5-trisphosphate generation and intracellular calcium mobilization. After costimulation of T-cells through CD28 can phosphorylate CBLB and is required for the ubiquitination and subsequent degradation of CBLB, which is a prerequisite for the activation of TCR. During T-cells differentiation, plays an important role in the development of T-helper 2 (Th2) cells following immune and inflammatory responses, and, in the development of inflammatory autoimmune diseases, is necessary for the activation of IL17-producing Th17 cells. May play a minor role in Th1 response. Upon TCR stimulation, mediates T-cell protective survival signal by phosphorylating BAD, thus protecting T-cells from BAD-induced apoptosis, and by up-regulating BCL-X(L)/BCL2L1 levels through NF-kappa-B and JUN pathways. In platelets, regulates signal transduction downstream of the ITGA2B, CD36/GP4, F2R/PAR1 and F2RL3/PAR4 receptors, playing a positive role in 'outside-in' signaling and granule secretion signal transduction. May relay signals from the activated ITGA2B receptor by regulating the uncoupling of WASP and WIPF1, thereby permitting the regulation of actin filament nucleation and branching activity of the Arp2/3 complex. May mediate inhibitory effects of free fatty acids on insulin signaling by phosphorylating IRS1, which in turn blocks IRS1 tyrosine phosphorylation and downstream activation of the PI3K/AKT pathway. Phosphorylates MSN (moesin) in the presence of phosphatidylglycerol or phosphatidylinositol. Phosphorylates PDPK1 at 'Ser-504' and 'Ser-532' and negatively regulates its ability to phosphorylate PKB/AKT1. Phosphorylates CCDC88A/GIV and inhibits its guanine nucleotide exchange factor activity. Phosphorylates and activates LRRK1, which phosphorylates RAB proteins involved in intracellular trafficking. The polypeptide is Protein kinase C theta type (Prkcq) (Rattus norvegicus (Rat)).